Consider the following 484-residue polypeptide: Aldehyde dehydrogenase family 3 member F1 (484 aa).

Position 192-197 (192-197) interacts with NAD(+); the sequence is GSPKIG. The active-site Proton acceptor is Glu-214. Residue Cys-252 is the Nucleophile of the active site.

The protein belongs to the aldehyde dehydrogenase family. In terms of assembly, homotetramer. As to expression, constituively expressed at low levels.

The catalysed reaction is an aldehyde + NAD(+) + H2O = a carboxylate + NADH + 2 H(+). This chain is Aldehyde dehydrogenase family 3 member F1 (ALDH3F1), found in Arabidopsis thaliana (Mouse-ear cress).